A 300-amino-acid polypeptide reads, in one-letter code: Bifunctional protein FolD 2 (300 aa).

Residues glycine 166–serine 168, serine 191, and isoleucine 232 contribute to the NADP(+) site.

It belongs to the tetrahydrofolate dehydrogenase/cyclohydrolase family. In terms of assembly, homodimer.

It carries out the reaction (6R)-5,10-methylene-5,6,7,8-tetrahydrofolate + NADP(+) = (6R)-5,10-methenyltetrahydrofolate + NADPH. The catalysed reaction is (6R)-5,10-methenyltetrahydrofolate + H2O = (6R)-10-formyltetrahydrofolate + H(+). It participates in one-carbon metabolism; tetrahydrofolate interconversion. Functionally, catalyzes the oxidation of 5,10-methylenetetrahydrofolate to 5,10-methenyltetrahydrofolate and then the hydrolysis of 5,10-methenyltetrahydrofolate to 10-formyltetrahydrofolate. This chain is Bifunctional protein FolD 2, found in Roseobacter denitrificans (strain ATCC 33942 / OCh 114) (Erythrobacter sp. (strain OCh 114)).